The sequence spans 207 residues: Peptidyl-prolyl cis-trans isomerase FKBP16-1, chloroplastic (207 aa).

The PPIase FKBP-type domain occupies 104-207; sequence GDLVELNYVC…VFEIQLLKVL (104 aa).

Belongs to the FKBP-type PPIase family.

The protein localises to the plastid. It is found in the chloroplast thylakoid lumen. It catalyses the reaction [protein]-peptidylproline (omega=180) = [protein]-peptidylproline (omega=0). Functionally, PPIases accelerate the folding of proteins. It catalyzes the cis-trans isomerization of proline imidic peptide bonds in oligopeptides. The polypeptide is Peptidyl-prolyl cis-trans isomerase FKBP16-1, chloroplastic (FKBP16-1) (Arabidopsis thaliana (Mouse-ear cress)).